A 254-amino-acid chain; its full sequence is Alcohol dehydrogenase (254 aa).

Position 1 is an N-acetylmethionine (Met1). An NAD(+)-binding site is contributed by 10-33; it reads FVAALGGIGLDTSRELVKRNLKNF. A substrate-binding site is contributed by Ser138. Tyr151 functions as the Proton acceptor in the catalytic mechanism.

This sequence belongs to the short-chain dehydrogenases/reductases (SDR) family. In terms of assembly, homodimer.

It carries out the reaction a primary alcohol + NAD(+) = an aldehyde + NADH + H(+). It catalyses the reaction a secondary alcohol + NAD(+) = a ketone + NADH + H(+). The protein is Alcohol dehydrogenase (Adh) of Drosophila lebanonensis (Fruit fly).